Here is a 202-residue protein sequence, read N- to C-terminus: Small ribosomal subunit protein uS4 (202 aa).

The interval 15–43 is disordered; the sequence is LGDLPGLTRKAAKRSNPPGQHGNARRKRS. One can recognise an S4 RNA-binding domain in the interval 90-152; the sequence is GRLDNVCFRL…KGSKKLAEGN (63 aa).

Belongs to the universal ribosomal protein uS4 family. In terms of assembly, part of the 30S ribosomal subunit. Contacts protein S5. The interaction surface between S4 and S5 is involved in control of translational fidelity.

Functionally, one of the primary rRNA binding proteins, it binds directly to 16S rRNA where it nucleates assembly of the body of the 30S subunit. Its function is as follows. With S5 and S12 plays an important role in translational accuracy. The chain is Small ribosomal subunit protein uS4 from Prochlorococcus marinus (strain SARG / CCMP1375 / SS120).